The chain runs to 142 residues: Augurin-A (142 aa).

The first 28 residues, 1-28, serve as a signal peptide directing secretion; sequence MLSEKFHLRLLTLLTLLTALSLTDVASE. 2 propeptides span residues 29-66 and 127-142; these read SKLE…LKRP and GAAS…YDYY.

This sequence belongs to the augurin family.

The protein resides in the secreted. The protein localises to the cytoplasm. It localises to the apical cell membrane. In terms of biological role, probable hormone. Required for the proper formation of the central nervous system by attenuating cell proliferation during development. This Danio rerio (Zebrafish) protein is Augurin-A.